The primary structure comprises 186 residues: NADH-dependent FMN reductase SfnE (186 aa).

Belongs to the SsuE family.

The enzyme catalyses FMNH2 + NAD(+) = FMN + NADH + 2 H(+). Functionally, involved in the dimethyl sulfide degradation pathway. Catalyzes the NADH-dependent reduction of FMN. The protein is NADH-dependent FMN reductase SfnE of Pseudomonas putida (Arthrobacter siderocapsulatus).